We begin with the raw amino-acid sequence, 322 residues long: uncharacterized protein (322 aa).

This is an uncharacterized protein from Aquifex aeolicus (strain VF5).